Consider the following 276-residue polypeptide: MQEYDQHNLTKAVIARLADTPNARTKQIMTSLVRHLHDFAREVRLTEAEWKQGIDYLTATGQMCDDKRQEFILLSDVLGLSMLTVAMNQEKPEGCTEPTVFGPFHVEGAPHYAHGADVANGAKGEPCMVYGRVTGVDGRPVAGAVVETWQADADGHYDVQYEGLEVAQGRGVLKSGEDGRFHFRTIVAQAYPIPDDGPVGELLRATGRHPWRPAHLHFMIKAPGYETLVTHVFRRGDKYLDSDAVFGVRTSLIGDWVRQTDGTYRLDFDFVLNPTL.

Residues Y157, Y191, H215, and H217 each coordinate Fe cation.

This sequence belongs to the intradiol ring-cleavage dioxygenase family. Fe(3+) is required as a cofactor.

It functions in the pathway aromatic compound metabolism. The protein operates within xenobiotic degradation. Its function is as follows. Involved in the degradation of 2,4,6-trichlorophenol (2,4,6-TCP). May catalyze the oxidation of 6-chlorohydroxyquinol (6-CHQ) to 2-chloromaleylacetate (2-CMA). This Cupriavidus pinatubonensis (strain JMP 134 / LMG 1197) (Cupriavidus necator (strain JMP 134)) protein is 6-chlorohydroxyquinol 1,2-dioxygenase.